Consider the following 287-residue polypeptide: uncharacterized protein (287 aa).

It belongs to the AllH family.

This is an uncharacterized protein from Escherichia coli (strain K12).